Here is a 208-residue protein sequence, read N- to C-terminus: Large ribosomal subunit protein uL4 (208 aa).

Residues 47–84 (ARAARERSDVARTGKKFGRQKGGGTARHGDRRAPVFIG) form a disordered region. Basic and acidic residues predominate over residues 49–58 (AARERSDVAR).

This sequence belongs to the universal ribosomal protein uL4 family. Part of the 50S ribosomal subunit.

In terms of biological role, one of the primary rRNA binding proteins, this protein initially binds near the 5'-end of the 23S rRNA. It is important during the early stages of 50S assembly. It makes multiple contacts with different domains of the 23S rRNA in the assembled 50S subunit and ribosome. Its function is as follows. Forms part of the polypeptide exit tunnel. This Rhizorhabdus wittichii (strain DSM 6014 / CCUG 31198 / JCM 15750 / NBRC 105917 / EY 4224 / RW1) (Sphingomonas wittichii) protein is Large ribosomal subunit protein uL4.